The sequence spans 507 residues: UDP-N-acetylhexosamine pyrophosphorylase-like protein 1 (507 aa).

The Substrate binding signature appears at 111–114 (LAGG). UTP-binding positions include 111–114 (LAGG), Lys125, Gln199, and Gly225. A substrate-binding site is contributed by Asn226. Asp256 contacts UTP. The Substrate binding motif lies at 306–307 (EY). UTP is bound at residue Lys380. Lys410 serves as a coordination point for substrate.

This sequence belongs to the UDPGP type 1 family.

The polypeptide is UDP-N-acetylhexosamine pyrophosphorylase-like protein 1 (Uap1l1) (Mus musculus (Mouse)).